A 146-amino-acid chain; its full sequence is Hemoglobin subunit beta (146 aa).

The 145-residue stretch at 2 to 146 (PFSAHEEKLI…VAAALSVEYY (145 aa)) folds into the Globin domain. Residues H63 and H92 each contribute to the heme b site.

Belongs to the globin family. In terms of assembly, heterotetramer of two alpha chains and two beta chains. When oxygenated in vitro, exists virtually only in polymeric form. When deoxygenated, forms tetramers, octamers and larger polymers. As to expression, red blood cells.

Functionally, involved in oxygen transport from the lung to the various peripheral tissues. This chain is Hemoglobin subunit beta, found in Paleosuchus palpebrosus (Cuvier's smooth-fronted caiman).